The following is a 436-amino-acid chain: uncharacterized protein (436 aa).

Helical transmembrane passes span 38–58, 70–90, 102–122, 125–145, 160–180, 197–217, 254–274, 291–311, 319–339, 342–362, 383–403, and 409–429; these read ILIFSQIFGGAGLGAGITVGA, VAGIPTALFTFGSAVAALLIG, LAGGFLIGGLGAIGVIIAALI, VALLFVSLLIYGAGMASNLQV, TAASMALVSTTLGAVVGPNLV, GPFIMSGAAFIIAGIILLIFL, IMVGAVIMILAQLIMTAIMTM, LVIGLHIAAMYLPSPLTGLLV, MAIASGATLLAAGLVAAIAPA, LSLLILALVLLGVGWNFGLLT, FDVLLALSGAAGGALSGMVVA, and ILSISGAVLSLLLIPVVIWYF.

The protein belongs to the major facilitator superfamily.

The protein resides in the cell membrane. This is an uncharacterized protein from Bacillus subtilis (strain 168).